The chain runs to 342 residues: HTH-type transcriptional regulator GbpR (342 aa).

Residues 16–73 (LKLRHLQLFVALDEHRNLHRAAASLTMSQPAASKLLGDLEESLGVTLFERHGRGVEPN) enclose the HTH lysR-type domain. The H-T-H motif DNA-binding region spans 33-52 (LHRAAASLTMSQPAASKLLG).

Belongs to the LysR transcriptional regulatory family.

Does not seem to be required for sbpA expression. The protein is HTH-type transcriptional regulator GbpR (gbpR) of Azospirillum brasilense.